The primary structure comprises 775 residues: Mitochondrial intermediate peptidase (775 aa).

Residues 1-28 constitute a mitochondrion transit peptide; the sequence is MIARPARDVLSSATKKQFRFRGCLAARH. A Zn(2+)-binding site is contributed by His-558. Glu-559 is a catalytic residue. His-562 and His-565 together coordinate Zn(2+).

It belongs to the peptidase M3 family. It depends on Zn(2+) as a cofactor.

It localises to the mitochondrion matrix. The enzyme catalyses Release of an N-terminal octapeptide as second stage of processing of some proteins imported into the mitochondrion.. In terms of biological role, cleaves proteins, imported into the mitochondrion, to their mature size. While most mitochondrial precursor proteins are processed to the mature form in one step by mitochondrial processing peptidase (MPP), the sequential cleavage by MIP of an octapeptide after initial processing by MPP is a required step for a subgroup of nuclear-encoded precursor proteins destined for the matrix or the inner membrane. In Schizophyllum commune (Split gill fungus), this protein is Mitochondrial intermediate peptidase (OCT1).